The sequence spans 543 residues: Cytochrome P450 1B1 (543 aa).

Residue cysteine 470 participates in heme binding.

The protein belongs to the cytochrome P450 family. It depends on heme as a cofactor. As to expression, constitutively expressed in retinal and kidney pericytes cells. Expressed in retinal endothelial cells (at protein level). Expressed in cardiac, pulmonary and aortic endothelial cells. Constitutively expressed in trabecular meshwork of the eye (at protein level).

Its subcellular location is the endoplasmic reticulum membrane. The protein resides in the microsome membrane. It localises to the mitochondrion. It catalyses the reaction an organic molecule + reduced [NADPH--hemoprotein reductase] + O2 = an alcohol + oxidized [NADPH--hemoprotein reductase] + H2O + H(+). The enzyme catalyses 17beta-estradiol + reduced [NADPH--hemoprotein reductase] + O2 = 2-hydroxy-17beta-estradiol + oxidized [NADPH--hemoprotein reductase] + H2O + H(+). The catalysed reaction is 17beta-estradiol + reduced [NADPH--hemoprotein reductase] + O2 = 4-hydroxy-17beta-estradiol + oxidized [NADPH--hemoprotein reductase] + H2O + H(+). It carries out the reaction estrone + reduced [NADPH--hemoprotein reductase] + O2 = 2-hydroxyestrone + oxidized [NADPH--hemoprotein reductase] + H2O + H(+). It catalyses the reaction estrone + reduced [NADPH--hemoprotein reductase] + O2 = 4-hydroxyestrone + oxidized [NADPH--hemoprotein reductase] + H2O + H(+). The enzyme catalyses testosterone + reduced [NADPH--hemoprotein reductase] + O2 = 6beta,17beta-dihydroxyandrost-4-en-3-one + oxidized [NADPH--hemoprotein reductase] + H2O + H(+). The catalysed reaction is progesterone + reduced [NADPH--hemoprotein reductase] + O2 = 6beta-hydroxyprogesterone + oxidized [NADPH--hemoprotein reductase] + H2O + H(+). It carries out the reaction progesterone + reduced [NADPH--hemoprotein reductase] + O2 = 16alpha-hydroxyprogesterone + oxidized [NADPH--hemoprotein reductase] + H2O + H(+). It catalyses the reaction all-trans-retinol + reduced [NADPH--hemoprotein reductase] + O2 = all-trans-retinal + oxidized [NADPH--hemoprotein reductase] + 2 H2O + H(+). The enzyme catalyses all-trans-retinal + reduced [NADPH--hemoprotein reductase] + O2 = all-trans-retinoate + oxidized [NADPH--hemoprotein reductase] + H2O + 2 H(+). The catalysed reaction is (5Z,8Z,11Z,14Z)-eicosatetraenoate + reduced [NADPH--hemoprotein reductase] + O2 = (8R,9S)-epoxy-(5Z,11Z,14Z)-eicosatrienoate + oxidized [NADPH--hemoprotein reductase] + H2O + H(+). It carries out the reaction (5Z,8Z,11Z,14Z)-eicosatetraenoate + reduced [NADPH--hemoprotein reductase] + O2 = (11R,12S)-epoxy-(5Z,8Z,14Z)-eicosatrienoate + oxidized [NADPH--hemoprotein reductase] + H2O + H(+). It catalyses the reaction (5Z,8Z,11Z,14Z)-eicosatetraenoate + reduced [NADPH--hemoprotein reductase] + O2 = (11S,12R)-epoxy-(5Z,8Z,14Z)-eicosatrienoate + oxidized [NADPH--hemoprotein reductase] + H2O + H(+). The enzyme catalyses (5Z,8Z,11Z,14Z)-eicosatetraenoate + reduced [NADPH--hemoprotein reductase] + O2 = (14R,15S)-epoxy-(5Z,8Z,11Z)-eicosatrienoate + oxidized [NADPH--hemoprotein reductase] + H2O + H(+). The catalysed reaction is (5S)-hydroperoxy-(6E,8Z,11Z,14Z)-eicosatetraenoate = 5-oxo-(6E,8Z,11Z,14Z)-eicosatetraenoate + H2O. It carries out the reaction (12S)-hydroperoxy-(5Z,8Z,10E,14Z)-eicosatetraenoate = 12-oxo-(5Z,8Z,10E,14Z)-eicosatetraenoate + H2O. It catalyses the reaction (13S)-hydroperoxy-(9Z,11E)-octadecadienoate = 13-oxo-(9Z,11E)-octadecadienoate + H2O. The enzyme catalyses (15S)-hydroperoxy-(5Z,8Z,11Z,13E)-eicosatetraenoate = 15-oxo-(5Z,8Z,11Z,13E)-eicosatetraenoate + H2O. Its pathway is steroid hormone biosynthesis. It functions in the pathway cofactor metabolism; retinol metabolism. The protein operates within lipid metabolism; arachidonate metabolism. Enzyme activity is increased by cytochrome b5. Enzyme activity is increased by liposomes containing anionic phospholipids, phosphatidic acid and cardiolipin. Inhibited by naringenin with an IC(50) of 5 uM. Its function is as follows. A cytochrome P450 monooxygenase involved in the metabolism of various endogenous substrates, including fatty acids, steroid hormones and vitamins. Mechanistically, uses molecular oxygen inserting one oxygen atom into a substrate, and reducing the second into a water molecule, with two electrons provided by NADPH via cytochrome P450 reductase (NADPH--hemoprotein reductase). Exhibits catalytic activity for the formation of hydroxyestrogens from 17beta-estradiol (E2), namely 2- and 4-hydroxy E2. Metabolizes testosterone and progesterone to B or D ring hydroxylated metabolites. May act as a major enzyme for all-trans retinoic acid biosynthesis in extrahepatic tissues. Catalyzes two successive oxidative transformation of all-trans retinol to all-trans retinal and then to the active form all-trans retinoic acid. Catalyzes the epoxidation of double bonds of certain PUFA. Converts arachidonic acid toward epoxyeicosatrienoic acid (EpETrE) regioisomers, 8,9-, 11,12-, and 14,15- EpETrE, that function as lipid mediators in the vascular system. Additionally, displays dehydratase activity toward oxygenated eicosanoids hydroperoxyeicosatetraenoates (HpETEs). This activity is independent of cytochrome P450 reductase, NADPH, and O2. Also involved in the oxidative metabolism of xenobiotics, particularly converting polycyclic aromatic hydrocarbons and heterocyclic aryl amines procarcinogens to DNA-damaging products. Plays an important role in retinal vascular development. Under ambient/hyperoxic O2 conditions, promotes angiogenesis and capillary morphogenesis of retinal endothelial cells and pericytes, likely by metabolizing the oxygenated products symptomatic of oxidative stress. Also, contributes to oxidative homeostasis and ultrastructural organization and function of trabecular meshwork tissue through modulation of POSTN expression. The polypeptide is Cytochrome P450 1B1 (Mus musculus (Mouse)).